The chain runs to 155 residues: Endoribonuclease YbeY (155 aa).

Residues His117, His121, and His127 each contribute to the Zn(2+) site.

Belongs to the endoribonuclease YbeY family. Zn(2+) is required as a cofactor.

The protein localises to the cytoplasm. Its function is as follows. Single strand-specific metallo-endoribonuclease involved in late-stage 70S ribosome quality control and in maturation of the 3' terminus of the 16S rRNA. In Psychrobacter cryohalolentis (strain ATCC BAA-1226 / DSM 17306 / VKM B-2378 / K5), this protein is Endoribonuclease YbeY.